Reading from the N-terminus, the 126-residue chain is Large ribosomal subunit protein bL17 (126 aa).

It belongs to the bacterial ribosomal protein bL17 family. In terms of assembly, part of the 50S ribosomal subunit. Contacts protein L32.

The protein is Large ribosomal subunit protein bL17 of Xylella fastidiosa (strain Temecula1 / ATCC 700964).